The chain runs to 1063 residues: Structural polyprotein (1063 aa).

Residues 1 to 131 (MASTTPITME…LGPPTNPFQA (131 aa)) are disordered. Positions 30-69 (GASQSRRPRPPRQRDSSTTGDDSGRDSGGPRRRRGNRGRG) are human C1QBP/SF2P32-binding. The residue at position 46 (S46) is a Phosphoserine; by host. The span at 59 to 69 (PRRRRGNRGRG) shows a compositional bias: basic residues. Over residues 70 to 87 (QRRDWSRAPPPPEERQET) the composition is skewed to basic and acidic residues. Over residues 93–107 (APKPSRAPPQQPQPP) the composition is skewed to pro residues. A disulfide bond links C153 and C197. Residues 279-300 (GAPQAFLAGLLLAAVAVGTARA) are functions as E2 signal peptide. Residues 301–534 (GLQPRADMAA…LWLATANALS (234 aa)) are Extracellular-facing. N353, N371, N410, and N429 each carry an N-linked (GlcNAc...) asparagine; by host glycan. A helical membrane pass occupies residues 535–555 (LDHALAAFVLLVPWVLIFMVC). At 556–582 (RRTCRRRGAAAALTAVVLQGYNPPAYG) the chain is on the cytoplasmic side. Residues 563 to 582 (GAAAALTAVVLQGYNPPAYG) are functions as E1 signal peptide. Over 583–1028 (EEAFTYLCTA…QTWAEWAAAH (446 aa)) the chain is Extracellular. 8 disulfide bridges follow: C590–C595, C619–C824, C641–C653, C699–C712, C758–C767, C807–C817, C931–C934, and C950–C983. Residue N658 is glycosylated (N-linked (GlcNAc...) asparagine; by host). Ca(2+) is bound by residues N670 and A671. 2 residues coordinate Ca(2+): D718 and T719. Residues N759 and N791 are each glycosylated (N-linked (GlcNAc...) asparagine; by host). Residues T1011 and T1012 are each glycosylated (O-linked (GalNAc...) threonine; by host). Residues 1029 to 1049 (WWQLTLGAICALLLAGLLACC) form a helical membrane-spanning segment. Over 1050-1063 (AKCLYYLRGAIAPR) the chain is Extracellular.

Homodimer; further assembles into homooligomer. Interacts with human C1QBP. Interacts (via N-terminus) with protease/methyltransferase p150. In terms of assembly, heterodimer with spike glycoprotein E2. As to quaternary structure, heterodimer with spike glycoprotein E1. Post-translationally, structural polyprotein: Specific enzymatic cleavages in vivo yield mature proteins. Two signal peptidase-mediated cleavages within the polyprotein produce the structural proteins capsid, E2, and E1. The E2 signal peptide remains attached to the C-terminus of the capsid protein after cleavage by the signal peptidase. Another signal peptide at E2 C-terminus directs E1 to the ER, with a similar mechanism. Contains three N-linked oligosaccharides. In terms of processing, capsid is phosphorylated on Ser-46 by host. This phosphorylation negatively regulates capsid protein RNA-binding activity. Dephosphorylated by human PP1A.

It is found in the virion. The protein resides in the host cytoplasm. It localises to the host mitochondrion. The protein localises to the virion membrane. Its subcellular location is the host Golgi apparatus membrane. Its function is as follows. Capsid protein interacts with genomic RNA and assembles into icosahedric core particles 65-70 nm in diameter. The resulting nucleocapsid eventually associates with the cytoplasmic domain of E2 at the cell membrane, leading to budding and formation of mature virions from host Golgi membranes. Phosphorylation negatively regulates RNA-binding activity, possibly delaying virion assembly during the viral replication phase. Capsid protein dimerizes and becomes disulfide-linked in the virion. Modulates genomic RNA replication. Modulates subgenomic RNA synthesis by interacting with human C1QBP/SF2P32. Induces both perinuclear clustering of mitochondria and the formation of electron-dense intermitochondrial plaques, both hallmarks of rubella virus infected cells. Induces apoptosis when expressed in transfected cells. Responsible for viral attachment to target host cell, by binding to the cell receptor. Its transport to the plasma membrane depends on interaction with E1 protein. The surface glycoproteins display an irregular helical organization and a pseudo-tetrameric inner nucleocapsid arrangement. Functionally, class II viral fusion protein. Fusion activity is inactive as long as E1 is bound to E2 in mature virion. After virus attachment to target cell and clathrin-mediated endocytosis, acidification of the endosome would induce dissociation of E1/E2 heterodimer and concomitant trimerization of the E1 subunits. This E1 homotrimer is fusion active, and promotes release of viral nucleocapsid in cytoplasm after endosome and viral membrane fusion. The cytoplasmic tail of spike glycoprotein E1 modulates virus release. The surface glycoproteins display an irregular helical organization and a pseudo-tetrameric inner nucleocapsid arrangement. The polypeptide is Structural polyprotein (Homo sapiens (Human)).